We begin with the raw amino-acid sequence, 502 residues long: Transmembrane prolyl 4-hydroxylase (502 aa).

The segment at 1–29 is disordered; it reads MAAAAVTGQRPETAAAEEASRPQWAPPDH. At 1–60 the chain is on the cytoplasmic side; it reads MAAAAVTGQRPETAAAEEASRPQWAPPDHCQAQAAAGLGDGEDAPVRPLCKPRGICSRAY. The helical; Signal-anchor for type II membrane protein transmembrane segment at 61–81 threads the bilayer; sequence FLVLMVFVHLYLGNVLALLLF. Over 82-502 the chain is Lumenal; that stretch reads VHYSNGDESS…RAYRDARVEL (421 aa). The interval 89-111 is disordered; sequence ESSDPGPQHRAQGPGPEPTLGPL. EF-hand domains follow at residues 185 to 220 and 224 to 259; these read TMQVSQLDLFRLLDQNRDGHLQLREVLAQTRLGNGW and PESIQEMYAAIKADPDGDGVLSLQEFSNMDLRDFHK. Residues aspartate 198, asparagine 200, aspartate 202, histidine 204, glutamate 209, aspartate 237, aspartate 239, aspartate 241, and glutamate 248 each coordinate Ca(2+). The 151-residue stretch at 310 to 460 folds into the Fe2OG dioxygenase domain; the sequence is LSEPLQVVRY…KWIANNWINV (151 aa). The Fe cation site is built by histidine 328 and aspartate 330. Residues asparagine 348 and asparagine 368 are each glycosylated (N-linked (GlcNAc...) asparagine). Glutamate 374 contacts Fe cation. N-linked (GlcNAc...) asparagine glycosylation is present at asparagine 382. Lysine 451 provides a ligand contact to 2-oxoglutarate.

In terms of assembly, homodimer. Fe(2+) is required as a cofactor. Requires L-ascorbate as cofactor. In terms of processing, glycosylated. In terms of tissue distribution, widely expressed with highest levels in adult pancreas, heart, skeletal muscle, brain, placenta, kidney and adrenal gland. Expressed at lower levels in epiphyseal cartilage and in fibroblasts.

The protein localises to the endoplasmic reticulum membrane. It carries out the reaction L-prolyl-[hypoxia-inducible factor alpha subunit] + 2-oxoglutarate + O2 = trans-4-hydroxy-L-prolyl-[hypoxia-inducible factor alpha subunit] + succinate + CO2. In terms of biological role, catalyzes the post-translational formation of 4-hydroxyproline in hypoxia-inducible factor (HIF) alpha proteins. Hydroxylates HIF1A at 'Pro-402' and 'Pro-564'. May function as a cellular oxygen sensor and, under normoxic conditions, may target HIF through the hydroxylation for proteasomal degradation via the von Hippel-Lindau ubiquitination complex. The sequence is that of Transmembrane prolyl 4-hydroxylase (P4HTM) from Homo sapiens (Human).